Here is a 148-residue protein sequence, read N- to C-terminus: NADPH-dependent 7-cyano-7-deazaguanine reductase (148 aa).

Cys-50 functions as the Thioimide intermediate in the catalytic mechanism. The Proton donor role is filled by Asp-57. Residues 72 to 74 (VES) and 91 to 92 (HE) each bind substrate.

This sequence belongs to the GTP cyclohydrolase I family. QueF type 1 subfamily.

Its subcellular location is the cytoplasm. The enzyme catalyses 7-aminomethyl-7-carbaguanine + 2 NADP(+) = 7-cyano-7-deazaguanine + 2 NADPH + 3 H(+). It functions in the pathway tRNA modification; tRNA-queuosine biosynthesis. In terms of biological role, catalyzes the NADPH-dependent reduction of 7-cyano-7-deazaguanine (preQ0) to 7-aminomethyl-7-deazaguanine (preQ1). In Helicobacter pylori (strain J99 / ATCC 700824) (Campylobacter pylori J99), this protein is NADPH-dependent 7-cyano-7-deazaguanine reductase.